A 1059-amino-acid chain; its full sequence is Transmembrane protease serine 9 (1059 aa).

The Cytoplasmic portion of the chain corresponds to 1–29 (MEPTVADVHLVPRTTKEVPALDAACCRAA). Residues 30–50 (SIGVVATSLVVLTLGVLLAFL) form a helical; Signal-anchor for type II membrane protein membrane-spanning segment. Over 51-1059 (STQGFHVDHT…RGWIGQHIQE (1009 aa)) the chain is Extracellular. The LDL-receptor class A domain maps to 153–190 (RCPGNSFSCGNSQCVTKVNPECDDQEDCSDGSDEAHCE). Cystine bridges form between cysteine 154–cysteine 166, cysteine 161–cysteine 180, cysteine 174–cysteine 189, and cysteine 228–cysteine 244. The region spanning 203–436 (IVGGMEASPG…LRDWILEATT (234 aa)) is the Peptidase S1 1 domain. Catalysis depends on charge relay system residues histidine 243 and aspartate 292. Disulfide bonds link cysteine 326–cysteine 393, cysteine 358–cysteine 372, and cysteine 383–cysteine 412. Residue serine 387 is the Charge relay system of the active site. Residues 443–469 (APTMAPAPAAPSTAWPTSPESPVVSTP) are disordered. In terms of domain architecture, Peptidase S1 2 spans 504–736 (VVGGFGAASG…LKGWILEIMS (233 aa)). The cysteines at positions 529 and 545 are disulfide-linked. The Charge relay system role is filled by histidine 544. Residue asparagine 547 is glycosylated (N-linked (GlcNAc...) asparagine). Residue aspartate 592 is the Charge relay system of the active site. Cystine bridges form between cysteine 626/cysteine 693, cysteine 658/cysteine 672, and cysteine 683/cysteine 712. N-linked (GlcNAc...) asparagine glycans are attached at residues asparagine 638 and asparagine 663. The active-site Charge relay system is the serine 687. The segment at 758–814 (TTAGLTVPGATPSRPTPGAASRVTGQPANSTLSAVSTTARGQTPFPDAPEATTHTQL) is disordered. Residues 780 to 798 (VTGQPANSTLSAVSTTARG) are compositionally biased toward polar residues. Asparagine 786 is a glycosylation site (N-linked (GlcNAc...) asparagine). Positions 827–1058 (IVGGSAAGRG…VRGWIGQHIQ (232 aa)) constitute a Peptidase S1 3 domain. Cystine bridges form between cysteine 853/cysteine 869, cysteine 949/cysteine 1015, cysteine 980/cysteine 994, and cysteine 1005/cysteine 1034.

The protein belongs to the peptidase S1 family. Post-translationally, proteolytically cleaved to generate 3 independent serine protease chains. The cleaved chains may remain attached to the membrane thanks to disulfide bonds. It is unclear whether cleavage always takes place. As to expression, expressed in fetal human tissues, such as kidney, liver, lung and brain, and in a variety of tumor cell lines. Weakly expressed in adult tissues including skeletal muscle, liver, placenta and heart.

The protein localises to the cell membrane. Its activity is regulated as follows. Inhibited by serine protease inhibitors PMSF and 4-(2-aminoethyl)benzenesulfonyl fluoride, but not by EDTA. Serase-1 and serase-2 are serine proteases that hydrolyze the peptides N-t-Boc-Gln-Ala-Arg-AMC and N-t-Boc-Gln-Gly-Arg-AMC. In contrast, N-t-Boc-Ala-Phe-Lys-AMC and N-t-Boc-Ala-Pro-Ala-AMC are not significantly hydrolyzed. This Homo sapiens (Human) protein is Transmembrane protease serine 9 (TMPRSS9).